The sequence spans 494 residues: PIGF/3-ketodihydrosphingosine reductase fusion protein (494 aa).

3 residues coordinate NADPH: glycine 20, serine 22, and glycine 24. Residues 20-24 (GGSQG) carry the GXSXG motif. Leucine 25 provides a ligand contact to NADP(+). NADPH contacts are provided by arginine 45 and lysine 49. Valine 54 contacts NADP(+). Residues aspartate 74 and leucine 75 each coordinate NADPH. Residues 148–168 (ILLVGSLLSSLPIIGYSAYSP) traverse the membrane as a helical segment. NADP(+)-binding residues include tyrosine 166, lysine 170, and isoleucine 199. Tyrosine 166 serves as the catalytic Proton acceptor. Residue lysine 170 is the Lowers pKa of active site Tyr of the active site. 6 consecutive transmembrane segments (helical) span residues 264–284 (HDNP…WPFY), 312–332 (IFTL…LNCL), 370–390 (LAGA…LVAF), 402–422 (YFCA…TLAF), 444–464 (LRSW…PLDW), and 473–493 (ITIV…GEIL).

This sequence in the N-terminal section; belongs to the short-chain dehydrogenases/reductases (SDR) family. It in the C-terminal section; belongs to the PIGF family.

Its subcellular location is the endoplasmic reticulum membrane. It catalyses the reaction sphinganine + NADP(+) = 3-oxosphinganine + NADPH + H(+). It functions in the pathway glycolipid biosynthesis; glycosylphosphatidylinositol-anchor biosynthesis. It participates in lipid metabolism; sphingolipid metabolism. Functionally, acts in the GPI biosynthetic pathway between GlcNAc-PI synthesis and GPI transfer to protein. Required for the formation of complete GPI precursors CP1 and CP2. Its function is as follows. Catalyzes the reduction of 3'-oxosphinganine (3-ketodihydrosphingosine/KDS) to sphinganine (dihydrosphingosine/DHS), the second step of de novo sphingolipid biosynthesis. This chain is PIGF/3-ketodihydrosphingosine reductase fusion protein, found in Schizosaccharomyces pombe (strain 972 / ATCC 24843) (Fission yeast).